A 287-amino-acid chain; its full sequence is Bifunctional protein FolD (287 aa).

Residues 166–168 (GAS) and Ile-232 contribute to the NADP(+) site.

Belongs to the tetrahydrofolate dehydrogenase/cyclohydrolase family. As to quaternary structure, homodimer.

It catalyses the reaction (6R)-5,10-methylene-5,6,7,8-tetrahydrofolate + NADP(+) = (6R)-5,10-methenyltetrahydrofolate + NADPH. It carries out the reaction (6R)-5,10-methenyltetrahydrofolate + H2O = (6R)-10-formyltetrahydrofolate + H(+). The protein operates within one-carbon metabolism; tetrahydrofolate interconversion. In terms of biological role, catalyzes the oxidation of 5,10-methylenetetrahydrofolate to 5,10-methenyltetrahydrofolate and then the hydrolysis of 5,10-methenyltetrahydrofolate to 10-formyltetrahydrofolate. This is Bifunctional protein FolD from Pectobacterium atrosepticum (strain SCRI 1043 / ATCC BAA-672) (Erwinia carotovora subsp. atroseptica).